The following is a 182-amino-acid chain: MENSRILSCKYRTSFGSSNARRIRSKDEIPAVVYGQGNDVLHLKIKSNEFNKKFAKFTDNTVLILDDGKLERCVFIKDVSENIASKLIYHIDFYEVDRRVELEKYVPIKLIGASVGVKEGGILTVLKEQVRVKSLPLDLPEFIELDLTPVNKGDSVFLKDLVLPSNVRLAENDENLEVVTIK.

Belongs to the bacterial ribosomal protein bL25 family. CTC subfamily. Part of the 50S ribosomal subunit; part of the 5S rRNA/L5/L18/L25 subcomplex. Contacts the 5S rRNA. Binds to the 5S rRNA independently of L5 and L18.

Functionally, this is one of the proteins that binds to the 5S RNA in the ribosome where it forms part of the central protuberance. The chain is Large ribosomal subunit protein bL25 from Borrelia garinii subsp. bavariensis (strain ATCC BAA-2496 / DSM 23469 / PBi) (Borreliella bavariensis).